A 368-amino-acid chain; its full sequence is Molybdenum import ATP-binding protein ModC (368 aa).

Positions 1–231 (MKGLQVAFKQ…QAMRPWQSFS (231 aa)) constitute an ABC transporter domain. Residue 33-40 (GRSGAGKT) participates in ATP binding. A Mop domain is found at 292 to 363 (KTSIRNIIEA…IKGVSVTQRD (72 aa)).

The protein belongs to the ABC transporter superfamily. Molybdate importer (TC 3.A.1.8) family. The complex is composed of two ATP-binding proteins (ModC), two transmembrane proteins (ModB) and a solute-binding protein (ModA).

It localises to the cell inner membrane. The catalysed reaction is molybdate(out) + ATP + H2O = molybdate(in) + ADP + phosphate + H(+). In terms of biological role, part of the ABC transporter complex ModABC involved in molybdenum import. Responsible for energy coupling to the transport system. This chain is Molybdenum import ATP-binding protein ModC, found in Vibrio vulnificus (strain YJ016).